A 660-amino-acid chain; its full sequence is Bifunctional polymyxin resistance protein ArnA (660 aa).

Residues 1–304 (MKTVVFAYHD…TLGLVQGSRL (304 aa)) form a formyltransferase ArnAFT region. 86–88 (HLI) is a binding site for (6R)-10-formyltetrahydrofolate. Histidine 104 serves as the catalytic Proton donor; for formyltransferase activity. (6R)-10-formyltetrahydrofolate is bound by residues arginine 114 and 136-140 (VKRAD). The dehydrogenase ArnADH stretch occupies residues 314–660 (RRTRVLILGV…RTVDLTDKPS (347 aa)). NAD(+)-binding positions include aspartate 347 and 368–369 (DI). UDP-alpha-D-glucuronate contacts are provided by residues alanine 393, tyrosine 398, and 432-433 (TS). Residue glutamate 434 is the Proton acceptor; for decarboxylase activity of the active site. UDP-alpha-D-glucuronate-binding positions include arginine 460, asparagine 492, 526-535 (KLIDGGKQKR), and tyrosine 613. The Proton donor; for decarboxylase activity role is filled by arginine 619.

This sequence in the N-terminal section; belongs to the Fmt family. UDP-L-Ara4N formyltransferase subfamily. It in the C-terminal section; belongs to the NAD(P)-dependent epimerase/dehydratase family. UDP-glucuronic acid decarboxylase subfamily. In terms of assembly, homohexamer, formed by a dimer of trimers.

The catalysed reaction is UDP-alpha-D-glucuronate + NAD(+) = UDP-beta-L-threo-pentopyranos-4-ulose + CO2 + NADH. It catalyses the reaction UDP-4-amino-4-deoxy-beta-L-arabinose + (6R)-10-formyltetrahydrofolate = UDP-4-deoxy-4-formamido-beta-L-arabinose + (6S)-5,6,7,8-tetrahydrofolate + H(+). It participates in nucleotide-sugar biosynthesis; UDP-4-deoxy-4-formamido-beta-L-arabinose biosynthesis; UDP-4-deoxy-4-formamido-beta-L-arabinose from UDP-alpha-D-glucuronate: step 1/3. The protein operates within nucleotide-sugar biosynthesis; UDP-4-deoxy-4-formamido-beta-L-arabinose biosynthesis; UDP-4-deoxy-4-formamido-beta-L-arabinose from UDP-alpha-D-glucuronate: step 3/3. Its pathway is bacterial outer membrane biogenesis; lipopolysaccharide biosynthesis. Functionally, bifunctional enzyme that catalyzes the oxidative decarboxylation of UDP-glucuronic acid (UDP-GlcUA) to UDP-4-keto-arabinose (UDP-Ara4O) and the addition of a formyl group to UDP-4-amino-4-deoxy-L-arabinose (UDP-L-Ara4N) to form UDP-L-4-formamido-arabinose (UDP-L-Ara4FN). The modified arabinose is attached to lipid A and is required for resistance to polymyxin and cationic antimicrobial peptides. This Shigella boydii serotype 4 (strain Sb227) protein is Bifunctional polymyxin resistance protein ArnA.